We begin with the raw amino-acid sequence, 215 residues long: MNIFRLAGDMTHLASVLVLLLKIHTIKSCAGVSLKTQELYAIVFATRYLDIFTSFVSLYNTSMKLVFLGSSFSIVWYMKYHKAVHRTYDREQDTFRHWFLVLPCFLLALLIHEKFTFLEVLWTSSLYLEAVAILPQLVLLQRTRNIDNLTGQYIFLLGGYRGLYILNWIYRYFTEPHFVHWITWIAGFVQTLLYADFFYYYFLSWKNNKKLQLPA.

Transmembrane regions (helical) follow at residues 6 to 26 (LAGD…IHTI), 55 to 77 (FVSL…IVWY), 98 to 118 (WFLV…FTFL), 120 to 140 (VLWT…LVLL), 149 to 169 (LTGQ…LNWI), and 178 to 198 (FVHW…ADFF).

The protein belongs to the ERD2 family.

Its subcellular location is the golgi apparatus membrane. The protein resides in the endoplasmic reticulum membrane. Determines the specificity of the luminal endoplasmic reticulum protein retention system. Required for the retro-transport of calreticulin-3 (CRT3) from the Golgi to the ER. Specifically required for elongation factor Tu receptor (EFR) function in response to the pathogen-associated molecular pattern (PAMP) elf18. The polypeptide is ER lumen protein-retaining receptor B (ERD2B) (Arabidopsis thaliana (Mouse-ear cress)).